The following is a 301-amino-acid chain: Probable 5-dehydro-4-deoxyglucarate dehydratase (301 aa).

This sequence belongs to the DapA family.

The enzyme catalyses 5-dehydro-4-deoxy-D-glucarate + H(+) = 2,5-dioxopentanoate + CO2 + H2O. The protein operates within carbohydrate acid metabolism; D-glucarate degradation; 2,5-dioxopentanoate from D-glucarate: step 2/2. This chain is Probable 5-dehydro-4-deoxyglucarate dehydratase, found in Allorhizobium ampelinum (strain ATCC BAA-846 / DSM 112012 / S4) (Agrobacterium vitis (strain S4)).